We begin with the raw amino-acid sequence, 268 residues long: Tryptophan synthase alpha chain (268 aa).

Active-site proton acceptor residues include E49 and D60.

Belongs to the TrpA family. Tetramer of two alpha and two beta chains.

The enzyme catalyses (1S,2R)-1-C-(indol-3-yl)glycerol 3-phosphate + L-serine = D-glyceraldehyde 3-phosphate + L-tryptophan + H2O. Its pathway is amino-acid biosynthesis; L-tryptophan biosynthesis; L-tryptophan from chorismate: step 5/5. In terms of biological role, the alpha subunit is responsible for the aldol cleavage of indoleglycerol phosphate to indole and glyceraldehyde 3-phosphate. In Escherichia coli O7:K1 (strain IAI39 / ExPEC), this protein is Tryptophan synthase alpha chain.